Here is a 206-residue protein sequence, read N- to C-terminus: Large ribosomal subunit protein uL3 (206 aa).

Residues valine 122 to arginine 154 form a disordered region.

The protein belongs to the universal ribosomal protein uL3 family. In terms of assembly, part of the 50S ribosomal subunit. Forms a cluster with proteins L14 and L19.

In terms of biological role, one of the primary rRNA binding proteins, it binds directly near the 3'-end of the 23S rRNA, where it nucleates assembly of the 50S subunit. This Leptospira borgpetersenii serovar Hardjo-bovis (strain JB197) protein is Large ribosomal subunit protein uL3.